The following is a 356-amino-acid chain: Peptide chain release factor 1 (356 aa).

Gln230 carries the N5-methylglutamine modification. Over residues 279 to 289 (ALDSARSEARK) the composition is skewed to basic and acidic residues. The tract at residues 279–299 (ALDSARSEARKSQVGSGDRSE) is disordered.

The protein belongs to the prokaryotic/mitochondrial release factor family. Methylated by PrmC. Methylation increases the termination efficiency of RF1.

The protein localises to the cytoplasm. In terms of biological role, peptide chain release factor 1 directs the termination of translation in response to the peptide chain termination codons UAG and UAA. This Caulobacter vibrioides (strain ATCC 19089 / CIP 103742 / CB 15) (Caulobacter crescentus) protein is Peptide chain release factor 1 (prfA).